Reading from the N-terminus, the 72-residue chain is Metallothionein-like protein 1B (72 aa).

It belongs to the metallothionein superfamily. Type 15 family. As to expression, expressed in leaves of mature plants.

In terms of biological role, metallothioneins have a high content of cysteine residues that bind various heavy metals. Functions as a metal chelator of nickel (Ni), cadmium (Cd), zinc (Zn) and copper (Cu). Possesses higher affinity for Ni and Cd ions compared to Zn and Cu ions. In Oryza sativa subsp. japonica (Rice), this protein is Metallothionein-like protein 1B (MT1B).